Here is a 293-residue protein sequence, read N- to C-terminus: Large ribosomal subunit protein uL18 (293 aa).

The interval Asp-249–Glu-273 is disordered. A compositionally biased stretch (basic residues) spans Lys-256–Lys-267.

Belongs to the universal ribosomal protein uL18 family. In terms of assembly, component of the large ribosomal subunit (LSU).

The protein localises to the cytoplasm. The protein resides in the nucleus. Its function is as follows. Component of the ribosome, a large ribonucleoprotein complex responsible for the synthesis of proteins in the cell. The small ribosomal subunit (SSU) binds messenger RNAs (mRNAs) and translates the encoded message by selecting cognate aminoacyl-transfer RNA (tRNA) molecules. The large subunit (LSU) contains the ribosomal catalytic site termed the peptidyl transferase center (PTC), which catalyzes the formation of peptide bonds, thereby polymerizing the amino acids delivered by tRNAs into a polypeptide chain. The nascent polypeptides leave the ribosome through a tunnel in the LSU and interact with protein factors that function in enzymatic processing, targeting, and the membrane insertion of nascent chains at the exit of the ribosomal tunnel. The chain is Large ribosomal subunit protein uL18 (rpl-5) from Caenorhabditis elegans.